The following is a 279-amino-acid chain: Reaction center protein L chain (279 aa).

The next 3 membrane-spanning stretches (helical) occupy residues 33–56 (GFFG…GASQ), 85–113 (GLWQ…RKLG), and 116–141 (YHVP…ILMG). Residues H154 and H174 each coordinate (7R,8Z)-bacteriochlorophyll b. A helical transmembrane segment spans residues 171–200 (NPAHMLAITFFFTTTLAMSMHGGLILSAAN). H191 is a binding site for Fe cation. F217 contributes to the a ubiquinone binding site. Residues 226–252 (GSLGIHRLGLFLALSAAFWSAVCIVIS) form a helical membrane-spanning segment. H231 provides a ligand contact to Fe cation.

It belongs to the reaction center PufL/M/PsbA/D family. Reaction center is composed of four bacteriochlorophylls, two bacteriopheophytins, two ubiquinones, one iron, and three highly hydrophobic polypeptide chains (designated L, M, and H).

It is found in the cell inner membrane. Its function is as follows. The reaction center is a membrane-bound complex that mediates the initial photochemical event in the electron transfer process of photosynthesis. The polypeptide is Reaction center protein L chain (pufL) (Rubrivivax gelatinosus (Rhodocyclus gelatinosus)).